A 71-amino-acid polypeptide reads, in one-letter code: Putative antitoxin VapB15 (71 aa).

Belongs to the UPF0330 family.

In terms of biological role, possibly the antitoxin component of a type II toxin-antitoxin (TA) system. Its cognate toxin is VapC15 (Potential). The protein is Putative antitoxin VapB15 (vapB15) of Archaeoglobus fulgidus (strain ATCC 49558 / DSM 4304 / JCM 9628 / NBRC 100126 / VC-16).